Reading from the N-terminus, the 314-residue chain is tRNA pseudouridine synthase B (314 aa).

Aspartate 54 acts as the Nucleophile in catalysis.

It belongs to the pseudouridine synthase TruB family. Type 1 subfamily.

The enzyme catalyses uridine(55) in tRNA = pseudouridine(55) in tRNA. Its function is as follows. Responsible for synthesis of pseudouridine from uracil-55 in the psi GC loop of transfer RNAs. The protein is tRNA pseudouridine synthase B of Cupriavidus metallidurans (strain ATCC 43123 / DSM 2839 / NBRC 102507 / CH34) (Ralstonia metallidurans).